A 205-amino-acid polypeptide reads, in one-letter code: Translation initiation factor 2 subunit beta (205 aa).

Residues 145-203 (GIEIGKEYTVTIESTGSAGEGIARYQGYTIYVPKAKKGERVKIIIRKIKRNVAIAELAD) enclose the TRAM domain.

Belongs to the eIF-2-beta/eIF-5 family. In terms of assembly, heterotrimer composed of an alpha, a beta and a gamma chain.

Its function is as follows. eIF-2 functions in the early steps of protein synthesis by forming a ternary complex with GTP and initiator tRNA. This Picrophilus torridus (strain ATCC 700027 / DSM 9790 / JCM 10055 / NBRC 100828 / KAW 2/3) protein is Translation initiation factor 2 subunit beta.